We begin with the raw amino-acid sequence, 189 residues long: Protein OPG107 (189 aa).

Topologically, residues 1–28 are intravirion; that stretch reads MDKTTLSVNACNLEYVREKAIVGVQAAK. The helical; Signal-anchor for type III membrane protein transmembrane segment at 29–49 threads the bilayer; it reads TSTLIFFVIILAISALLLWFQ. Residues 50–189 are Virion surface-facing; that stretch reads TSDNPVFNEL…HWCSDFSNME (140 aa).

This sequence belongs to the orthopoxvirus OPG107 family. As to quaternary structure, part of a stable entry-fusion complex (EFC) which is at least composed of proteins OPG143, OPG147, OPG155, OPG86, OPG94, OPG107, OPG104, and OPG099. Formation of the viral membrane is necessary for the assembly of the complex. In terms of processing, contains two intramolecular disulfide bonds. They are created by the viral disulfide bond formation pathway, a poxvirus-specific pathway that operates on the cytoplasmic side of the MV membranes.

It is found in the virion membrane. It localises to the host endoplasmic reticulum membrane. In terms of biological role, envelope protein part of the entry-fusion complex responsible for the virus membrane fusion with host cell membrane during virus entry. Also plays a role in cell-cell fusion (syncytium formation). The polypeptide is Protein OPG107 (OPG107) (Bos taurus (Bovine)).